We begin with the raw amino-acid sequence, 544 residues long: Chaperonin GroEL (544 aa).

Residues 30–33, Lys-51, 87–91, Gly-415, and Asp-495 each bind ATP; these read TLGP and DGTTT.

This sequence belongs to the chaperonin (HSP60) family. In terms of assembly, forms a cylinder of 14 subunits composed of two heptameric rings stacked back-to-back. Interacts with the co-chaperonin GroES.

It is found in the cytoplasm. It carries out the reaction ATP + H2O + a folded polypeptide = ADP + phosphate + an unfolded polypeptide.. Its function is as follows. Together with its co-chaperonin GroES, plays an essential role in assisting protein folding. The GroEL-GroES system forms a nano-cage that allows encapsulation of the non-native substrate proteins and provides a physical environment optimized to promote and accelerate protein folding. This chain is Chaperonin GroEL, found in Bartonella bacilliformis.